Reading from the N-terminus, the 361-residue chain is Cobalt-precorrin-5B C(1)-methyltransferase (361 aa).

It belongs to the CbiD family.

It carries out the reaction Co-precorrin-5B + S-adenosyl-L-methionine = Co-precorrin-6A + S-adenosyl-L-homocysteine. It participates in cofactor biosynthesis; adenosylcobalamin biosynthesis; cob(II)yrinate a,c-diamide from sirohydrochlorin (anaerobic route): step 6/10. Functionally, catalyzes the methylation of C-1 in cobalt-precorrin-5B to form cobalt-precorrin-6A. The polypeptide is Cobalt-precorrin-5B C(1)-methyltransferase (Methylorubrum extorquens (strain CM4 / NCIMB 13688) (Methylobacterium extorquens)).